A 126-amino-acid chain; its full sequence is Protein ApaG (126 aa).

The ApaG domain maps to 2–126; that stretch reads DISTPCIKCQ…FRLAIPNILN (125 aa).

In Vibrio atlanticus (strain LGP32) (Vibrio splendidus (strain Mel32)), this protein is Protein ApaG.